Reading from the N-terminus, the 356-residue chain is S-adenosylmethionine:tRNA ribosyltransferase-isomerase (356 aa).

This sequence belongs to the QueA family. In terms of assembly, monomer.

It is found in the cytoplasm. The enzyme catalyses 7-aminomethyl-7-carbaguanosine(34) in tRNA + S-adenosyl-L-methionine = epoxyqueuosine(34) in tRNA + adenine + L-methionine + 2 H(+). It participates in tRNA modification; tRNA-queuosine biosynthesis. Its function is as follows. Transfers and isomerizes the ribose moiety from AdoMet to the 7-aminomethyl group of 7-deazaguanine (preQ1-tRNA) to give epoxyqueuosine (oQ-tRNA). The protein is S-adenosylmethionine:tRNA ribosyltransferase-isomerase of Cronobacter sakazakii (strain ATCC BAA-894) (Enterobacter sakazakii).